The following is a 158-amino-acid chain: Encapsulin nanocompartment cargo protein EncB (158 aa).

Positions 22, 52, and 55 each coordinate Fe cation. Short sequence motifs (di-iron-binding motif) lie at residues 52-55 and 58-61; these read EKEH and EAVH. Positions 92 to 158 are disordered; it reads ATVHVPTPDG…RGGGGSGSGR (67 aa). A probable targeting peptide region spans residues 142 to 149; that stretch reads LTVGSLRR. Gly residues predominate over residues 148–158; the sequence is RRGGGGSGSGR.

Belongs to the ferritin-like superfamily.

The protein resides in the encapsulin nanocompartment. Cargo protein of a type 1 encapsulin nanocompartment. May help nucleate Fe atoms in the interior of the encapsulin nanocompartment. Present in about 36 copies/encapsulin nanocompartment. The sequence is that of Encapsulin nanocompartment cargo protein EncB from Myxococcus xanthus (strain DK1622).